The chain runs to 393 residues: NAD(P)H-quinone oxidoreductase subunit H 1 (393 aa).

This sequence belongs to the complex I 49 kDa subunit family. In terms of assembly, NDH-1 can be composed of about 15 different subunits; different subcomplexes with different compositions have been identified which probably have different functions.

Its subcellular location is the cell inner membrane. It catalyses the reaction a plastoquinone + NADH + (n+1) H(+)(in) = a plastoquinol + NAD(+) + n H(+)(out). The enzyme catalyses a plastoquinone + NADPH + (n+1) H(+)(in) = a plastoquinol + NADP(+) + n H(+)(out). Its function is as follows. NDH-1 shuttles electrons from an unknown electron donor, via FMN and iron-sulfur (Fe-S) centers, to quinones in the respiratory and/or the photosynthetic chain. The immediate electron acceptor for the enzyme in this species is believed to be plastoquinone. Couples the redox reaction to proton translocation, and thus conserves the redox energy in a proton gradient. Cyanobacterial NDH-1 also plays a role in inorganic carbon-concentration. The sequence is that of NAD(P)H-quinone oxidoreductase subunit H 1 from Gloeobacter violaceus (strain ATCC 29082 / PCC 7421).